Consider the following 494-residue polypeptide: MARAAPLLAALTALLAAAAAGGDAPPGKIAVVGAGIGGSAVAHFLQQHFGPRVQIDVYEKGTVGGRLATISVNKQHYESGAASFHSLSLHMQDFVKLLGLRHRREVVGRSAIFGGEHFMLEETDWYLLNLFRLWWHYGISFLRLQMWVEEVMEKFMRIYKYQAHGYAFSGVEELLYSLGESTFVNMTQHSVAESLLQVGVTQRFIDDVVSAVLRASYGQSAAMPAFAGAMSLAGAQGSLWSVEGGNKLVCSGLLKLTKANVIHATVTSVTLHSTEGKALYQVAYENEVGNSSDFYDIVVIATPLHLDNSSSNLTFAGFHPPIDDVQGSFQPTVVSLVHGYLNSSYFGFPDPKLFPFANILTTDFPSFFCTLDNICPVNISASFRRKQPQEAAVWRVQSPKPLFRTQLKTLFRSYYSVQTAEWQAHPLYGSRPTLPRFALHDQLFYLNALEWAASSVEVMAVAAKNVALLAYNRWYQDLDKIDQKDLMHKVKTEL.

Positions Met-1–Gly-22 are cleaved as a signal peptide. N-linked (GlcNAc...) asparagine glycosylation occurs at Asn-342.

Belongs to the prenylcysteine oxidase family. FAD serves as cofactor.

The protein localises to the secreted. Likely to have oxidoreductase activity. Required in the mevalonate pathway to regulate prenylation and enhances the bactericidal activity of neutrophils. The chain is Prenylcysteine oxidase 1-like (PCYOX1L) from Homo sapiens (Human).